Reading from the N-terminus, the 111-residue chain is uncharacterized protein (111 aa).

3 helical membrane passes run 22–42 (ASLICLHTLSLVSFSFLANIT), 48–68 (LTPAGIIESIPVVFTAVVSVL), and 75–95 (VLVTVSVVLFKISLGAIPKIL).

The protein localises to the membrane. This is an uncharacterized protein from Saccharomyces cerevisiae (strain ATCC 204508 / S288c) (Baker's yeast).